A 359-amino-acid chain; its full sequence is N-acetylhexosamine 1-kinase (359 aa).

Residues 21-359 enclose the Protein kinase domain; sequence VTGIEPYGDG…IVADIMEAAR (339 aa).

It belongs to the protein kinase superfamily. Mg(2+) serves as cofactor.

The enzyme catalyses N-acetyl-D-hexosamine + ATP = N-acetyl-alpha-D-hexosamine 1-phosphate + ADP + H(+). Functionally, phosphorylates both N-acetylglucosamine (GlcNAc) and N-acetylgalactosamine (GalNAc) at similar rates. Involved in the lacto-N-biose I/galacto-N-biose (LNB/GNB) degradation pathway, which is important for host intestinal colonization by bifidobacteria. Also accepts GTP and ITP as phosphate donors. In vitro, can phosphorylate several GlcNAc and GalNAc derivatives. This Bifidobacterium longum subsp. longum (strain ATCC 15707 / DSM 20219 / JCM 1217 / NCTC 11818 / E194b) protein is N-acetylhexosamine 1-kinase (nahK).